Consider the following 411-residue polypeptide: G1/S-specific cyclin pas1 (411 aa).

Disordered regions lie at residues 210 to 253 (LKNQ…PSVL) and 307 to 326 (SLSK…VGVY). Residues 218–252 (PSSSPQTTQDSSPILTMAPSTPVSVGSTPPSTPSV) show a composition bias toward low complexity.

This sequence belongs to the cyclin family.

Functionally, essential for the control of the cell cycle at the G1/S (start) transition. Interacts with the pef1 protein kinase. The pef1/pas1 complex activates the res2/cdc10 complex. This Schizosaccharomyces pombe (strain 972 / ATCC 24843) (Fission yeast) protein is G1/S-specific cyclin pas1 (pas1).